The following is a 439-amino-acid chain: MQVSSYLRRALRRPPFPAGDANHRRLSSAPAPKPEAPAEAMPPPPMPTRPWGEALAAAQRAFCLPLAGRVLAAAGTGNAAVSAPAVHVSLALAAGGARGATRRQVLQALGCGGGGRGGAADAANVASRVVKRVLRDRSTSGGPRLAFAGGVWADASRSLSPEFVGLAGNVYGSAAKKADFKNKPEDAPDQINSWVKDSTKGTVTTLLPAGTIDQNTGLVLGSALYFRGRWLDRDDLRRTTEQKFYCLDGTSVEVPFVEYDRTRLFAVHDNFKVIKLPYKQGKNERKFSMYIFLPDDHDGLFELTQKIFSEPMFLEQHLPTEKCHVGISVPNFKISFQIDVKDFLKDMGLELPFLREAEFSDMIKEDDSSGPLFLSDVLHKAVLEVDQKGIEETSVSMGLGKPLPAQHFKADHPFFFMIREEVSGTVIFMGHVLDPSSRT.

A disordered region spans residues 12-44 (RRPPFPAGDANHRRLSSAPAPKPEAPAEAMPPP). Pro residues predominate over residues 31-44 (APKPEAPAEAMPPP). Residues 389–413 (GIEETSVSMGLGKPLPAQHFKADHP) are RCL.

It belongs to the serpin family.

The protein is Probable non-inhibitory serpin-Z9 of Oryza sativa subsp. japonica (Rice).